The chain runs to 126 residues: Precursor of CEP2 (126 aa).

Positions 1–19 (MKLFIITVVTILTISRVFD) are cleaved as a signal peptide. A propeptide spanning residues 20 to 80 (KTPATTEARK…ENNLKNRFIN (61 aa)) is cleaved from the precursor. Hydroxyproline is present on residues proline 84 and proline 87. Residues 96–105 (PRVLNNKFTN) constitute a propeptide that is removed on maturation. Proline 109, proline 112, and proline 116 each carry hydroxyproline. Positions 121–126 (PGVVNV) are excised as a propeptide.

The protein belongs to the C-terminally encoded plant signaling peptide (CEP) family. In terms of assembly, interacts with CEP receptors (e.g. CEPR1 and CEPR2). Post-translationally, the mature small signaling peptide is generated by proteolytic processing of the longer precursor. In terms of tissue distribution, mostly expressed in roots. Present in cotyledons, shoot apical meristem (SAM), leaves, inflorescence stems and flowers.

Its subcellular location is the secreted. It localises to the extracellular space. The protein localises to the apoplast. Extracellular signaling peptide that represses primary root growth rate. Negatively regulates the number of leaves and flowering, and modulates leaf morphology. Regulates systemic nitrogen (N)-demand signaling. Mediates up-regulation of genes involved in N uptake and assimilation pathways. The sequence is that of Precursor of CEP2 from Arabidopsis thaliana (Mouse-ear cress).